A 571-amino-acid polypeptide reads, in one-letter code: PHD and RING finger domain-containing protein C126.07c (571 aa).

The RING-type 1; atypical zinc finger occupies 18-79 (CIICLSNLPN…RVANTCPLCR (62 aa)). The PHD-type zinc-finger motif lies at 122–170 (TCRCVICGRSDHAEVLLLCDGCDDAYHTYCLNMDAVPIEEFYCPNCVLL). The RING-type 2; degenerate zinc finger occupies 125–168 (CVICGRSDHAEVLLLCDGCDDAYHTYCLNMDAVPIEEFYCPNCV). Residues 305–324 (ATEATISNPRPSSGRFQQTP) show a composition bias toward polar residues. Residues 305-377 (ATEATISNPR…VLGNNSSSKS (73 aa)) form a disordered region. Positions 346–356 (RRQKRPTRRHI) are enriched in basic residues. A compositionally biased stretch (polar residues) spans 359–377 (SNKSSGSSTVLGNNSSSKS).

The protein localises to the cytoplasm. It localises to the nucleus. The polypeptide is PHD and RING finger domain-containing protein C126.07c (Schizosaccharomyces pombe (strain 972 / ATCC 24843) (Fission yeast)).